The primary structure comprises 199 residues: Transmembrane protein 223 (199 aa).

Topologically, residues 1-43 (MVASVPLRNVSHLLSVLRSQNVPRYLQNGVPRDVLLFRHERGR) are mitochondrial matrix. Residues 44-64 (FFAILGLFCAGQGIFWTSLAV) form a helical membrane-spanning segment. The Mitochondrial intermembrane portion of the chain corresponds to 65–94 (AALSRPLSRVPAEAPNRSYQDLRSALWRYG). Residues 95–115 (LAVGCGTMGVLVLGAGLLYSL) traverse the membrane as a helical segment. The Mitochondrial matrix segment spans residues 116–199 (RSVRSVMLLA…DNTVGAYRSL (84 aa)).

This sequence belongs to the TMEM223 family. In terms of assembly, associates with the mitochondrial ribosome.

Its subcellular location is the mitochondrion inner membrane. Its function is as follows. Mitochondrial ribosome-associated protein involved in the first steps of cytochrome c oxidase complex (complex IV) biogenesis. Stimulates the translation of MT-CO1 mRNA and is a constituent of early MT-CO1 assembly intermediates. This Mus musculus (Mouse) protein is Transmembrane protein 223.